The following is a 450-amino-acid chain: Molybdate-anion transporter (450 aa).

12 consecutive transmembrane segments (helical) span residues 1–21 (MLVT…GLEL), 43–63 (LDFY…APYL), 79–99 (ILYV…SSLV), 128–148 (FVLL…FSAF), 174–194 (AAFW…AVAS), 195–215 (WIGL…ALAG), 249–269 (VLLL…FVFL), 278–298 (GAPL…GSSL), 311–331 (PMHL…MLTF), 344–364 (FIAF…MSFL), 376–396 (GVLN…LLVL), and 409–429 (FSIC…LFTV).

The protein belongs to the major facilitator superfamily.

It localises to the cell membrane. Functionally, mediates high-affinity intracellular uptake of the rare oligo-element molybdenum. In Pongo abelii (Sumatran orangutan), this protein is Molybdate-anion transporter (MFSD5).